Consider the following 55-residue polypeptide: Large ribosomal subunit protein bL33 (55 aa).

Belongs to the bacterial ribosomal protein bL33 family.

The polypeptide is Large ribosomal subunit protein bL33 (Paraburkholderia phytofirmans (strain DSM 17436 / LMG 22146 / PsJN) (Burkholderia phytofirmans)).